The sequence spans 490 residues: Cytochrome P450 2C38 (490 aa).

Residues 1 to 20 (MDLVTFLVLTLSSLILLSLW) form the signal peptide. Residue cysteine 435 coordinates heme.

It belongs to the cytochrome P450 family. It depends on heme as a cofactor. Liver, brain, kidney, and intestine, with trace amounts in lung and heart.

Its subcellular location is the endoplasmic reticulum membrane. The protein localises to the microsome membrane. The enzyme catalyses an organic molecule + reduced [NADPH--hemoprotein reductase] + O2 = an alcohol + oxidized [NADPH--hemoprotein reductase] + H2O + H(+). It carries out the reaction (5Z,8Z,11Z,14Z)-eicosatetraenoate + reduced [NADPH--hemoprotein reductase] + O2 = 11,12-epoxy-(5Z,8Z,14Z)-eicosatrienoate + oxidized [NADPH--hemoprotein reductase] + H2O + H(+). It participates in lipid metabolism; arachidonate metabolism. In terms of biological role, a cytochrome P450 monooxygenase that primarily catalyzes the epoxidation of 11,12 double bond of (5Z,8Z,11Z,14Z)-eicosatetraenoic acid (arachidonate) forming 11,12-epoxyeicosatrienoic acid (11,12-EET) regioisomer. Mechanistically, uses molecular oxygen inserting one oxygen atom into a substrate, and reducing the second into a water molecule, with two electrons provided by NADPH via cytochrome P450 reductase (CPR; NADPH--hemoprotein reductase). The chain is Cytochrome P450 2C38 from Mus musculus (Mouse).